We begin with the raw amino-acid sequence, 442 residues long: Proline--tRNA ligase (442 aa).

This sequence belongs to the class-II aminoacyl-tRNA synthetase family. ProS type 2 subfamily. As to quaternary structure, homodimer.

The protein resides in the cytoplasm. The enzyme catalyses tRNA(Pro) + L-proline + ATP = L-prolyl-tRNA(Pro) + AMP + diphosphate. In terms of biological role, catalyzes the attachment of proline to tRNA(Pro) in a two-step reaction: proline is first activated by ATP to form Pro-AMP and then transferred to the acceptor end of tRNA(Pro). This Chelativorans sp. (strain BNC1) protein is Proline--tRNA ligase.